A 321-amino-acid polypeptide reads, in one-letter code: tRNA pseudouridine synthase B (321 aa).

The active-site Nucleophile is the D47.

Belongs to the pseudouridine synthase TruB family. Type 1 subfamily.

The catalysed reaction is uridine(55) in tRNA = pseudouridine(55) in tRNA. Responsible for synthesis of pseudouridine from uracil-55 in the psi GC loop of transfer RNAs. The polypeptide is tRNA pseudouridine synthase B (Shewanella baltica (strain OS185)).